Here is a 352-residue protein sequence, read N- to C-terminus: Ribosome biogenesis protein BRX1 homolog (352 aa).

Residues 1–55 (MGKFSKIKKVQEEESAHQKMEWEAAGAKDSSSDDSSDESDNDDQPKQATEETRKR) form a disordered region. Residues 9–22 (KVQEEESAHQKMEW) show a composition bias toward basic and acidic residues. Acidic residues predominate over residues 32–42 (SDDSSDESDND). Positions 43–55 (DQPKQATEETRKR) are enriched in basic and acidic residues. One can recognise a Brix domain in the interval 63–253 (ERVLVLCSRG…MVRLFAGSFE (191 aa)).

The protein belongs to the BRX1 family.

The protein localises to the nucleus. It is found in the nucleolus. Functionally, required for biogenesis of the 60S ribosomal subunit. This Caenorhabditis elegans protein is Ribosome biogenesis protein BRX1 homolog.